Reading from the N-terminus, the 327-residue chain is tRNA dimethylallyltransferase (327 aa).

An ATP-binding site is contributed by Gly-14–Thr-21. Residue Thr-16–Thr-21 coordinates substrate. Interaction with substrate tRNA regions lie at residues Asp-39–Leu-42 and Gln-163–Arg-167.

This sequence belongs to the IPP transferase family. As to quaternary structure, monomer. Mg(2+) serves as cofactor.

It catalyses the reaction adenosine(37) in tRNA + dimethylallyl diphosphate = N(6)-dimethylallyladenosine(37) in tRNA + diphosphate. Functionally, catalyzes the transfer of a dimethylallyl group onto the adenine at position 37 in tRNAs that read codons beginning with uridine, leading to the formation of N6-(dimethylallyl)adenosine (i(6)A). The sequence is that of tRNA dimethylallyltransferase from Xanthomonas euvesicatoria pv. vesicatoria (strain 85-10) (Xanthomonas campestris pv. vesicatoria).